The following is a 467-amino-acid chain: Glycogen synthase (467 aa).

Lys-15 contributes to the ADP-alpha-D-glucose binding site.

It belongs to the glycosyltransferase 1 family. Bacterial/plant glycogen synthase subfamily.

The enzyme catalyses [(1-&gt;4)-alpha-D-glucosyl](n) + ADP-alpha-D-glucose = [(1-&gt;4)-alpha-D-glucosyl](n+1) + ADP + H(+). It participates in glycan biosynthesis; glycogen biosynthesis. Its function is as follows. Synthesizes alpha-1,4-glucan chains using ADP-glucose. The chain is Glycogen synthase from Desulfitobacterium hafniense (strain DSM 10664 / DCB-2).